The following is a 208-amino-acid chain: MGISRDNWHKRRKTGGKRKPYHKKRKYEPGRPAANTKIGPRRIHTVRVRGGNKKYRALRLDAGNFSWGSECCTRKTRIIDVVYNASNNELVRTKTLVKNCILLVDSTPFRQWFEAHYALPLGRKKGAKLTPEEEEILNKKRSKKTQKKYEERKKTAKISPLLEEQFQQGKLLACIASRPGQCGRADGYVLEGKELEFYLRKIKAKKGK.

Residues 1–37 are disordered; sequence MGISRDNWHKRRKTGGKRKPYHKKRKYEPGRPAANTK. Positions 8–26 are enriched in basic residues; the sequence is WHKRRKTGGKRKPYHKKRK.

Belongs to the eukaryotic ribosomal protein eS8 family. Component of the small ribosomal subunit. Identified in a IGF2BP1-dependent mRNP granule complex containing untranslated mRNAs. Part of the small subunit (SSU) processome, composed of more than 70 proteins and the RNA chaperone small nucleolar RNA (snoRNA) U3.

The protein resides in the cytoplasm. The protein localises to the membrane. It localises to the nucleus. It is found in the nucleolus. In terms of biological role, component of the small ribosomal subunit. The ribosome is a large ribonucleoprotein complex responsible for the synthesis of proteins in the cell. Part of the small subunit (SSU) processome, first precursor of the small eukaryotic ribosomal subunit. During the assembly of the SSU processome in the nucleolus, many ribosome biogenesis factors, an RNA chaperone and ribosomal proteins associate with the nascent pre-rRNA and work in concert to generate RNA folding, modifications, rearrangements and cleavage as well as targeted degradation of pre-ribosomal RNA by the RNA exosome. The sequence is that of Small ribosomal subunit protein eS8 (rps8) from Xenopus laevis (African clawed frog).